The chain runs to 179 residues: Large ribosomal subunit protein uL5 (179 aa).

This sequence belongs to the universal ribosomal protein uL5 family. Part of the 50S ribosomal subunit; part of the 5S rRNA/L5/L18/L25 subcomplex. Contacts the 5S rRNA and the P site tRNA. Forms a bridge to the 30S subunit in the 70S ribosome.

This is one of the proteins that bind and probably mediate the attachment of the 5S RNA into the large ribosomal subunit, where it forms part of the central protuberance. In the 70S ribosome it contacts protein S13 of the 30S subunit (bridge B1b), connecting the 2 subunits; this bridge is implicated in subunit movement. Contacts the P site tRNA; the 5S rRNA and some of its associated proteins might help stabilize positioning of ribosome-bound tRNAs. This Aromatoleum aromaticum (strain DSM 19018 / LMG 30748 / EbN1) (Azoarcus sp. (strain EbN1)) protein is Large ribosomal subunit protein uL5.